The following is a 362-amino-acid chain: Heme A synthase (362 aa).

5 helical membrane-spanning segments follow: residues 12–32, 102–122, 128–148, 159–179, and 198–218; these read AVKI…LVGG, VIGL…HLGG, LWLI…MVAS, ERLA…VWTL, and AAAL…VAGL. H262 provides a ligand contact to heme. The next 3 helical transmembrane spans lie at 264–286, 291–311, and 314–334; these read MLAY…ARAG, GAVW…FTLL, and VPIG…MLGV. H322 provides a ligand contact to heme.

This sequence belongs to the COX15/CtaA family. Type 2 subfamily. Interacts with CtaB. It depends on heme b as a cofactor.

The protein localises to the cell membrane. The catalysed reaction is Fe(II)-heme o + 2 A + H2O = Fe(II)-heme a + 2 AH2. The protein operates within porphyrin-containing compound metabolism; heme A biosynthesis; heme A from heme O: step 1/1. In terms of biological role, catalyzes the conversion of heme O to heme A by two successive hydroxylations of the methyl group at C8. The first hydroxylation forms heme I, the second hydroxylation results in an unstable dihydroxymethyl group, which spontaneously dehydrates, resulting in the formyl group of heme A. The protein is Heme A synthase of Rhodopseudomonas palustris (strain BisA53).